A 300-amino-acid polypeptide reads, in one-letter code: 2-dehydropantoate 2-reductase (300 aa).

Residues 7 to 12, Lys-74, Asn-99, and Ala-123 each bind NADP(+); that span reads GAGAIG. Residue Lys-179 is the Proton donor of the active site. Substrate-binding positions include Lys-179, Asn-183, Asn-187, Asn-197, and 246–249; that span reads NYNS. Residue Glu-261 participates in NADP(+) binding.

This sequence belongs to the ketopantoate reductase family.

The protein resides in the cytoplasm. It catalyses the reaction (R)-pantoate + NAD(+) = 2-dehydropantoate + NADH + H(+). The enzyme catalyses (R)-pantoate + NADP(+) = 2-dehydropantoate + NADPH + H(+). The protein operates within cofactor biosynthesis; coenzyme A biosynthesis. Functionally, catalyzes the NAD(P)H-dependent reduction of ketopantoate into pantoic acid. The chain is 2-dehydropantoate 2-reductase (apbA) from Pyrococcus abyssi (strain GE5 / Orsay).